The primary structure comprises 138 residues: Small ribosomal subunit protein uS11 (138 aa).

Positions 1 to 12 are enriched in low complexity; that stretch reads MPPAKKAAAAPK. Positions 1–27 are disordered; the sequence is MPPAKKAAAAPKKGQKTRRREKKNVPH. The span at 13–22 shows a compositional bias: basic residues; sequence KGQKTRRREK.

It belongs to the universal ribosomal protein uS11 family. In terms of assembly, part of the 30S ribosomal subunit. Interacts with proteins S7 and S18. Binds to IF-3.

Its function is as follows. Located on the platform of the 30S subunit, it bridges several disparate RNA helices of the 16S rRNA. Forms part of the Shine-Dalgarno cleft in the 70S ribosome. The protein is Small ribosomal subunit protein uS11 of Mycolicibacterium paratuberculosis (strain ATCC BAA-968 / K-10) (Mycobacterium paratuberculosis).